Here is a 451-residue protein sequence, read N- to C-terminus: UDP-N-acetylmuramate--L-alanine ligase (451 aa).

110–116 (GTHGKTT) serves as a coordination point for ATP.

The protein belongs to the MurCDEF family.

The protein resides in the cytoplasm. The enzyme catalyses UDP-N-acetyl-alpha-D-muramate + L-alanine + ATP = UDP-N-acetyl-alpha-D-muramoyl-L-alanine + ADP + phosphate + H(+). The protein operates within cell wall biogenesis; peptidoglycan biosynthesis. In terms of biological role, cell wall formation. This chain is UDP-N-acetylmuramate--L-alanine ligase, found in Francisella tularensis subsp. mediasiatica (strain FSC147).